A 109-amino-acid chain; its full sequence is Small ribosomal subunit protein uS10 (109 aa).

This sequence belongs to the universal ribosomal protein uS10 family. As to quaternary structure, part of the 30S ribosomal subunit.

Involved in the binding of tRNA to the ribosomes. In Nanoarchaeum equitans (strain Kin4-M), this protein is Small ribosomal subunit protein uS10.